The sequence spans 1751 residues: Non-reducing polyketide synthase afvB (1751 aa).

The tract at residues 19 to 249 (FRRLRLHSKC…PLPVYGGPCH (231 aa)) is N-terminal acylcarrier protein transacylase domain (SAT). The 431-residue stretch at 381-811 (HEKIAVIGMS…GGNTSLLLEE (431 aa)) folds into the Ketosynthase family 3 (KS3) domain. Active-site for beta-ketoacyl synthase activity residues include C554, H689, and H730. Residues 910–1228 (FVFSGQGSFS…SMSALHSAGV (319 aa)) form a malonyl-CoA:ACP transacylase (MAT) domain region. A product template (PT) domain region spans residues 1291–1607 (TALVHHILEE…PRILMSRFFD (317 aa)). The interval 1295–1429 (HHILEESFGK…GVVTCGDSHS (135 aa)) is N-terminal hotdog fold. Residues 1295-1603 (HHILEESFGK…LRPLPRILMS (309 aa)) form the PKS/mFAS DH domain. The active-site Proton acceptor; for dehydratase activity is H1327. Residues 1456–1603 (LASRVSKDLV…LRPLPRILMS (148 aa)) are C-terminal hotdog fold. Residue D1514 is the Proton donor; for dehydratase activity of the active site. The tract at residues 1610–1670 (DSQYGQMAQQ…KAPISGSWPN (61 aa)) is disordered. Residues 1612 to 1657 (QYGQMAQQEPSTALPSTPQHTSSAKTTESTPSQQDESDNTSLATPE) are compositionally biased toward polar residues. The 78-residue stretch at 1670–1747 (NANSQLVRDA…DLKAYLEGNQ (78 aa)) folds into the Carrier domain. Residue S1707 is modified to O-(pantetheine 4'-phosphoryl)serine.

The cofactor is pantetheine 4'-phosphate. In terms of tissue distribution, expressed mainly in sclerotia, with expression levels 20-fold and 10-fold greater than the expression levels of this gene found in mycelium and conidia, respectively.

It functions in the pathway secondary metabolite biosynthesis. Non-reducing polyketide synthase (NRPKS); part of the gene cluster that mediates the biosynthesis of aflavarin, a bicoumarin that exhibits anti-insectan activity against the fungivorous beetle C.hemipterus. Catalyzes the formation of the aromatic polyketide from acetyl coenzyme A and seven malonyl coenzyme A molecules. The polypeptide is Non-reducing polyketide synthase afvB (Aspergillus flavus (strain ATCC 200026 / FGSC A1120 / IAM 13836 / NRRL 3357 / JCM 12722 / SRRC 167)).